Reading from the N-terminus, the 275-residue chain is MRLVILDDYALASEWAAKYICNRIIQFSPGPDKYFTLGLPTGSTPLGCYKKLIEYHKSGDLSFKYVKTFNMDEYVGLPRDHPESYHSYMWNNFFKHIDIDPSNAHILDGNASDLQAECEDFERKIKEAGGIELFVGGIGPDGHIAFNEPGSSLVSRTRLKTLAMDTILANAKYFDGDLSKVPTMALTVGVGTVMDAREVMILITGAHKAFALYKAIEEGVNHMWTVSAFQQHPRTIFVCDEDATLELRVKTVKYFKGLMHVHNRLVDPLHSMKKN.

Asp72 acts as the Proton acceptor; for enolization step in catalysis. The stretch at 103 to 131 (NAHILDGNASDLQAECEDFERKIKEAGGI) forms a coiled coil. Catalysis depends on Asp141, which acts as the For ring-opening step. Catalysis depends on His143, which acts as the Proton acceptor; for ring-opening step. Glu148 acts as the For ring-opening step in catalysis.

This sequence belongs to the glucosamine/galactosamine-6-phosphate isomerase family. In terms of assembly, homohexamer.

It is found in the cytoplasm. It carries out the reaction alpha-D-glucosamine 6-phosphate + H2O = beta-D-fructose 6-phosphate + NH4(+). Its function is as follows. Catalyzes the reversible conversion of alpha-D-glucosamine 6-phosphate (GlcN-6P) into beta-D-fructose 6-phosphate (Fru-6P) and ammonium ion, a regulatory reaction step in de novo uridine diphosphate-N-acetyl-alpha-D-glucosamine (UDP-GlcNAc) biosynthesis via hexosamine pathway. The protein is Glucosamine-6-phosphate deaminase 2 of Xenopus tropicalis (Western clawed frog).